Here is a 306-residue protein sequence, read N- to C-terminus: Non-homologous end joining protein Ku 2 (306 aa).

The Ku domain maps to 21–206 (ISFGLVNIGV…EVSKQEIDMA (186 aa)). Residues 233-306 (LIDAKTKGTK…GSRDKTRKRA (74 aa)) are disordered. Residues 274–290 (RTSRRKTTASASRRRSS) show a composition bias toward basic residues. Positions 291–300 (SNREKTGSRD) are enriched in basic and acidic residues.

This sequence belongs to the prokaryotic Ku family. In terms of assembly, homodimer. Interacts with LigD.

Functionally, with LigD forms a non-homologous end joining (NHEJ) DNA repair enzyme, which repairs dsDNA breaks with reduced fidelity. Binds linear dsDNA with 5'- and 3'- overhangs but not closed circular dsDNA nor ssDNA. Recruits and stimulates the ligase activity of LigD. This chain is Non-homologous end joining protein Ku 2, found in Saccharopolyspora erythraea (strain ATCC 11635 / DSM 40517 / JCM 4748 / NBRC 13426 / NCIMB 8594 / NRRL 2338).